The sequence spans 150 residues: Transcription antitermination protein NusB (150 aa).

This sequence belongs to the NusB family.

Functionally, involved in transcription antitermination. Required for transcription of ribosomal RNA (rRNA) genes. Binds specifically to the boxA antiterminator sequence of the ribosomal RNA (rrn) operons. The protein is Transcription antitermination protein NusB of Streptococcus pyogenes serotype M3 (strain ATCC BAA-595 / MGAS315).